Reading from the N-terminus, the 779-residue chain is MINPDNNDLYDLNEALKVENLTINDYEEICKRLKRKPNRTELGMFGVMWSEHCCYRNSKPLLSNFPTKGKNILVGPGENAGVIDVGNNQKLVFKIESHNHPSAIEPFQGAATGVGGILRDIFTMGARPIAVLNSLRFGNLDKTSNMDLLRGVVSGIAHYGNCVGVPTVGGEIDFDDSYSGNPLVNVMALGLLETNEIVCSGAKNVGSPVLYVGNTTGRDGVGGASFASSELTITSLDDRPAVQVGDPFIEKSLIEACLDAFKTGDVIAAQDMGAAGLTCSSAEMAANGNLGISIDLDLVPSREDNMSSYQYLLSESQERMLFVVKEEKINNLIEKFNKWGLYANVIGEVIETNEVIISHKRKIVAQIPTSALSDDTPVNLHNVMKNPPNYLLKKWKWNENNLPEINEQKIFSLKENKSFSYSEIILKLLANPSIASKRWIYKQYDSQVQANTVFKPGESDAAVIRLREQNEKNKSKVFSGVAASVDCNSRWVSLDPFRGTIAAVAESARNVSCVGAEPVAITNNLNFSSPETEIGYWQLSSSCNAISEACKALETPVTGGNVSLYNESKNRDNEITPINPTPVIGMVGKIDNVEKAISTEWKNINDQIWLIGSHKSETTIAASSYLEYFHGEITGRPPKIDLQDEKFCQSFLRNAILNNFVVSSHDISDGGLAIALAECCILSAKGATIELEKDLNRDDNVLFSEGGSRIIFSIDKMKEKEWSNYLKKIQINSQSNVYVKKIGYVSSEILKIKIQDKNICDISVEELTEKFNNSISGYF.

Residue His-52 is part of the active site. ATP-binding residues include Tyr-55 and Lys-94. Glu-96 serves as a coordination point for Mg(2+). Residues 97-100 (SHNH) and Arg-119 each bind substrate. His-98 (proton acceptor) is an active-site residue. Asp-120 contacts Mg(2+). Substrate is bound at residue Gln-243. Asp-271 lines the Mg(2+) pocket. A substrate-binding site is contributed by 315 to 317 (ESQ). Residues Asn-523 and Gly-560 each contribute to the ATP site. Asn-561 serves as a coordination point for Mg(2+). Position 563 (Ser-563) interacts with substrate.

Belongs to the FGAMS family. Monomer. Part of the FGAM synthase complex composed of 1 PurL, 1 PurQ and 2 PurS subunits.

The protein resides in the cytoplasm. The enzyme catalyses N(2)-formyl-N(1)-(5-phospho-beta-D-ribosyl)glycinamide + L-glutamine + ATP + H2O = 2-formamido-N(1)-(5-O-phospho-beta-D-ribosyl)acetamidine + L-glutamate + ADP + phosphate + H(+). Its pathway is purine metabolism; IMP biosynthesis via de novo pathway; 5-amino-1-(5-phospho-D-ribosyl)imidazole from N(2)-formyl-N(1)-(5-phospho-D-ribosyl)glycinamide: step 1/2. Its function is as follows. Part of the phosphoribosylformylglycinamidine synthase complex involved in the purines biosynthetic pathway. Catalyzes the ATP-dependent conversion of formylglycinamide ribonucleotide (FGAR) and glutamine to yield formylglycinamidine ribonucleotide (FGAM) and glutamate. The FGAM synthase complex is composed of three subunits. PurQ produces an ammonia molecule by converting glutamine to glutamate. PurL transfers the ammonia molecule to FGAR to form FGAM in an ATP-dependent manner. PurS interacts with PurQ and PurL and is thought to assist in the transfer of the ammonia molecule from PurQ to PurL. The polypeptide is Phosphoribosylformylglycinamidine synthase subunit PurL (Prochlorococcus marinus (strain MIT 9312)).